We begin with the raw amino-acid sequence, 160 residues long: Large ribosomal subunit protein bL17 (160 aa).

A compositionally biased stretch (basic and acidic residues) spans 123 to 141 (DEKRQKRAEARAKRREEMQ). The interval 123–160 (DEKRQKRAEARAKRREEMQKAMAEQQQAEGGEPEGGNE) is disordered. Positions 142 to 152 (KAMAEQQQAEG) are enriched in low complexity.

The protein belongs to the bacterial ribosomal protein bL17 family. As to quaternary structure, part of the 50S ribosomal subunit. Contacts protein L32.

The polypeptide is Large ribosomal subunit protein bL17 (Acidobacterium capsulatum (strain ATCC 51196 / DSM 11244 / BCRC 80197 / JCM 7670 / NBRC 15755 / NCIMB 13165 / 161)).